Here is a 242-residue protein sequence, read N- to C-terminus: MWVNTLRCPEGIEKVFPGPFACYNRLFDPGSQLDSYALIEETLHTYGPFDGAFGFSQGAALIVSYLLERRAAYPDESLPFRFLILCSPVVPLAGNAEYCHRILGCLSRDNESRIRSCQDTQISDLPERARIAMTMLTDILDASTTITQEPRRFYLDRELPDVPCALHPDLCLTRLPVATLHVRGTTDAKALWNCGFLIQSFFDSPKLRVFEHKSGHDIPRSGPEVRQMLCAMEWIIAQSELP.

Catalysis depends on charge relay system residues Ser56, Asp138, and His216.

This sequence belongs to the AB hydrolase 3 family.

It functions in the pathway alkaloid biosynthesis. Functionally, serine hydrolase; part of the gene cluster that mediates the biosynthesis of communesins, a prominent class of indole alkaloids with great potential as pharmaceuticals. Communesins are biosynthesized by the coupling of tryptamine and aurantioclavine, two building blocks derived from L-tryptophan. The L-tryptophan decarboxylase cnsB converts L-tryptophan to tryptamine, whereas the tryptophan dimethylallyltransferase cnsF converts L-tryptophan to 4-dimethylallyl tryptophan which is further transformed to aurantioclavine by the aurantioclavine synthase cnsA, probably aided by the catalase cnsD. The cytochrome P450 monooxygenase cnsC catalyzes the heterodimeric coupling between the two different indole moieties, tryptamine and aurantioclavine, to construct vicinal quaternary stereocenters and yield the heptacyclic communesin scaffold. The O-methyltransferase cnsE then methylates the communesin scaffold to produce communesin K, the simplest characterized communesin that contains the heptacyclic core. The dioxygenase cnsJ converts communesin K into communesin I. Acylation to introduce the hexadienyl group at position N16 of communesin I by the acyltransferase cnsK leads to the production of communesin B. The hexadienyl group is produced by the highly reducing polyketide synthase cnsI, before being hydrolytically removed from cnsI by the serine hydrolase cnsH, converted into hexadienyl-CoA by the CoA ligase cnsG, and then transferred to communesin I by cnsK. Surprisingly, cnsK may also be a promiscuous acyltransferase that can tolerate a range of acyl groups, including acetyl-, propionyl-, and butyryl-CoA, which lead to communesins A, G and H respectively. The roles of the alpha-ketoglutarate-dependent dioxygenases cnsM and cnsP have still to be determined. This chain is Serine hydrolase cnsH, found in Penicillium expansum (Blue mold rot fungus).